The primary structure comprises 147 residues: Large ribosomal subunit protein uL15 (147 aa).

Positions 1-11 (MKLHDLRPAKD) are enriched in basic and acidic residues. Residues 1–57 (MKLHDLRPAKDAKKKRKRVGRGTGSGRGFTSGRGSKGQNARSGGGVRPTFEGGQTPL) form a disordered region. The segment covering 21-35 (RGTGSGRGFTSGRGS) has biased composition (gly residues).

The protein belongs to the universal ribosomal protein uL15 family. As to quaternary structure, part of the 50S ribosomal subunit.

Binds to the 23S rRNA. The protein is Large ribosomal subunit protein uL15 of Halothermothrix orenii (strain H 168 / OCM 544 / DSM 9562).